The following is a 380-amino-acid chain: Protein phosphatase methylesterase 1 (380 aa).

The segment at 1–38 (MSALEKSMHLGRLPSRPPLPGSGGSQSGAKMRMGPGRK) is disordered. The residue at position 15 (Ser15) is a Phosphoserine. Asymmetric dimethylarginine; alternate is present on Arg16. The residue at position 16 (Arg16) is an Omega-N-methylarginine; alternate. A Phosphoserine modification is found at Ser42. Catalysis depends on residues Ser156 and Asp181. Residues 255–265 (IEEEEEDEEGS) show a composition bias toward acidic residues. The segment at 255–280 (IEEEEEDEEGSESVNKRKKEDDMETK) is disordered. Residues 268-280 (VNKRKKEDDMETK) show a composition bias toward basic and acidic residues. His349 is an active-site residue.

The protein belongs to the AB hydrolase superfamily. As to quaternary structure, binds PPP2CA and PPP2CB. Post-translationally, phosphorylated by SIK1 following increases in intracellular sodium, leading to dissociation from the protein phosphatase 2A (PP2A) complex and subsequent dephosphorylation of sodium/potassium-transporting ATPase ATP1A1.

The enzyme catalyses [phosphatase 2A protein]-C-terminal L-leucine methyl ester + H2O = [phosphatase 2A protein]-C-terminal L-leucine + methanol + H(+). In terms of biological role, demethylates proteins that have been reversibly carboxymethylated. Demethylates PPP2CB (in vitro) and PPP2CA. Binding to PPP2CA displaces the manganese ion and inactivates the enzyme. The chain is Protein phosphatase methylesterase 1 (PPME1) from Bos taurus (Bovine).